The chain runs to 624 residues: Chaperone protein HtpG (624 aa).

An a; substrate-binding region spans residues 1-336; sequence MKGQETRGFQ…SSDLPLNVSR (336 aa). The tract at residues 337–552 is b; that stretch reads EILQDSTVTR…ADEMSTQMAK (216 aa). The segment at 553–624 is c; the sequence is LFAAAGQKVP…IRRMNQLLVS (72 aa).

Belongs to the heat shock protein 90 family. Homodimer.

It localises to the cytoplasm. Its function is as follows. Molecular chaperone. Has ATPase activity. The polypeptide is Chaperone protein HtpG (Shigella flexneri).